The chain runs to 346 residues: Protein Spea_1705 (346 aa).

The Proton acceptor role is filled by cysteine 101. Substrate-binding positions include 102–103 (GH), aspartate 262, and 267–268 (GT).

This sequence belongs to the proline racemase family.

The enzyme catalyses trans-3-hydroxy-L-proline = 1-pyrroline-2-carboxylate + H2O. Functionally, in vitro, catalyzes the dehydration of trans-3-hydroxy-L-proline (t3LHyp) to Delta(1)-pyrroline-2-carboxylate (Pyr2C), albeit with very low efficiency. The physiological substrate may be different. Displays neither trans-4-hydroxy-L-proline (t4LHyp) epimerase nor proline racemase activity. This chain is Protein Spea_1705, found in Shewanella pealeana (strain ATCC 700345 / ANG-SQ1).